The chain runs to 125 residues: Large ribosomal subunit protein bL21 (125 aa).

The protein belongs to the bacterial ribosomal protein bL21 family. As to quaternary structure, part of the 50S ribosomal subunit. Contacts protein L20.

Its function is as follows. This protein binds to 23S rRNA in the presence of protein L20. The chain is Large ribosomal subunit protein bL21 from Synechococcus sp. (strain CC9311).